Consider the following 180-residue polypeptide: NADH-quinone oxidoreductase subunit I (180 aa).

2 consecutive 4Fe-4S ferredoxin-type domains span residues L50–S80 and K90–D119. Positions 60, 63, 66, 70, 99, 102, 105, and 109 each coordinate [4Fe-4S] cluster.

The protein belongs to the complex I 23 kDa subunit family. In terms of assembly, NDH-1 is composed of 13 different subunits. Subunits NuoA, H, J, K, L, M, N constitute the membrane sector of the complex. [4Fe-4S] cluster serves as cofactor.

It localises to the cell membrane. It carries out the reaction a quinone + NADH + 5 H(+)(in) = a quinol + NAD(+) + 4 H(+)(out). Its function is as follows. NDH-1 shuttles electrons from NADH, via FMN and iron-sulfur (Fe-S) centers, to quinones in the respiratory chain. The immediate electron acceptor for the enzyme in this species is believed to be ubiquinone. Couples the redox reaction to proton translocation (for every two electrons transferred, four hydrogen ions are translocated across the cytoplasmic membrane), and thus conserves the redox energy in a proton gradient. The protein is NADH-quinone oxidoreductase subunit I of Buchnera aphidicola subsp. Acyrthosiphon pisum (strain APS) (Acyrthosiphon pisum symbiotic bacterium).